The sequence spans 243 residues: MSDRKTIADSKRAFNHDFPHVIPSLYRRTTDELLVELHLLSHQKHFHPDALFAIGLSQVFDVFTSGYRPEAHVKTLFDALCRSCGFDPNALRKQAQQTLESVRGHDLEEVQGWIQQQGKGAPEALAKALRNTAGSTTFHYSRLMAVGLLSLLASAQGDESSDPEKLSQIAHELSESVGFSKARVEKDLNLYKSNLEKMAQAVELTEQILESERRKREQNESAKLNTGSSEQMSQGVEACSNIS.

The stretch at 180 to 224 (SKARVEKDLNLYKSNLEKMAQAVELTEQILESERRKREQNESAKL) forms a coiled coil. Residues 210–220 (ESERRKREQNE) are compositionally biased toward basic and acidic residues. Positions 210–243 (ESERRKREQNESAKLNTGSSEQMSQGVEACSNIS) are disordered. A compositionally biased stretch (polar residues) spans 221–243 (SAKLNTGSSEQMSQGVEACSNIS).

This sequence belongs to the THF1 family.

May be involved in photosynthetic membrane biogenesis. This is Protein Thf1 from Prochlorococcus marinus (strain MIT 9313).